Reading from the N-terminus, the 439-residue chain is UDP-N-acetylglucosamine--N-acetylmuramyl-(pentapeptide) pyrophosphoryl-undecaprenol N-acetylglucosamine transferase (439 aa).

UDP-N-acetyl-alpha-D-glucosamine is bound by residues 25–27 (TGG), arginine 218, serine 248, and glutamine 362.

Belongs to the glycosyltransferase 28 family. MurG subfamily.

The protein resides in the cell membrane. The enzyme catalyses di-trans,octa-cis-undecaprenyl diphospho-N-acetyl-alpha-D-muramoyl-L-alanyl-D-glutamyl-meso-2,6-diaminopimeloyl-D-alanyl-D-alanine + UDP-N-acetyl-alpha-D-glucosamine = di-trans,octa-cis-undecaprenyl diphospho-[N-acetyl-alpha-D-glucosaminyl-(1-&gt;4)]-N-acetyl-alpha-D-muramoyl-L-alanyl-D-glutamyl-meso-2,6-diaminopimeloyl-D-alanyl-D-alanine + UDP + H(+). It functions in the pathway cell wall biogenesis; peptidoglycan biosynthesis. Functionally, cell wall formation. Catalyzes the transfer of a GlcNAc subunit on undecaprenyl-pyrophosphoryl-MurNAc-pentapeptide (lipid intermediate I) to form undecaprenyl-pyrophosphoryl-MurNAc-(pentapeptide)GlcNAc (lipid intermediate II). This is UDP-N-acetylglucosamine--N-acetylmuramyl-(pentapeptide) pyrophosphoryl-undecaprenol N-acetylglucosamine transferase from Roseiflexus sp. (strain RS-1).